A 206-amino-acid polypeptide reads, in one-letter code: MELKVTTLEGKEAGSVQLSDAIFGLEPRQDIVQRCVIWQLAKRQAGTHKAKGRAEIWRTGKKMYKQKGTGGARHGSQRVPQFRGGGRAFGPVVRSHAIDLPKKVRALALRHALSAKAKGGGLIVIDKAELEAAKTKALVGAFSGLGLTNALIIDGAEVNNGFATAARNIPNIDVLPVQGINVYDIVRRRKLVLTKAALDALEARFK.

This sequence belongs to the universal ribosomal protein uL4 family. In terms of assembly, part of the 50S ribosomal subunit.

One of the primary rRNA binding proteins, this protein initially binds near the 5'-end of the 23S rRNA. It is important during the early stages of 50S assembly. It makes multiple contacts with different domains of the 23S rRNA in the assembled 50S subunit and ribosome. In terms of biological role, forms part of the polypeptide exit tunnel. The sequence is that of Large ribosomal subunit protein uL4 from Rhodopseudomonas palustris (strain BisB5).